A 185-amino-acid polypeptide reads, in one-letter code: Ribosome-recycling factor (185 aa).

Belongs to the RRF family.

It is found in the cytoplasm. In terms of biological role, responsible for the release of ribosomes from messenger RNA at the termination of protein biosynthesis. May increase the efficiency of translation by recycling ribosomes from one round of translation to another. The chain is Ribosome-recycling factor from Streptococcus uberis (strain ATCC BAA-854 / 0140J).